Consider the following 586-residue polypeptide: Adenine deaminase (586 aa).

Belongs to the metallo-dependent hydrolases superfamily. Adenine deaminase family. It depends on Mn(2+) as a cofactor.

It catalyses the reaction adenine + H2O + H(+) = hypoxanthine + NH4(+). In Bdellovibrio bacteriovorus (strain ATCC 15356 / DSM 50701 / NCIMB 9529 / HD100), this protein is Adenine deaminase.